The chain runs to 226 residues: Acyl-homoserine-lactone synthase (226 aa).

It belongs to the autoinducer synthase family.

The enzyme catalyses a fatty acyl-[ACP] + S-adenosyl-L-methionine = an N-acyl-L-homoserine lactone + S-methyl-5'-thioadenosine + holo-[ACP] + H(+). In terms of biological role, required for the synthesis of OHHL (N-(3-oxohexanoyl)-L-homoserine lactone), an autoinducer molecule. This Pseudomonas amygdali pv. tabaci (Pseudomonas syringae pv. tabaci) protein is Acyl-homoserine-lactone synthase (psyI).